The following is a 501-amino-acid chain: MDQQEAPIYYGRSVNKVYNQEFIIDSRFKIVKELGHGAYGIVCSAKYDNGSKKVPDSNNGNASSSANASFVAIKKITNIFSKNILCKRALRELKLLQFFRGHKNITCLYDLDIIPNPMTGEFNEIYLYEELMECDMHQIIRSGQPLSDQHYQSFIYQVLCGLNFIHSADVLHRDLKPGNLLVNADCELKICDFGLARGFSENPDENAGFMTEYVATRWYRAPEIMLSFTNYTKAIDIWSVGCILAELLGGKPLFRGKDYVDQLNQILMILGTPPESTLQRIGSHRAQNYVRSLPITRKASYEELFPDANPLALDLLERMLTLDPRERITVRDALNHKYLELWHDPKEEIECQVKFDFKSFETVDGLDEMKQLIMDEVQKFREFVRKPIEEQQRIQMQLHMQKREEQRQEEEEKELLEQQRQFPAQESMDISQTPYNNLETNIGTPQVEDDYPRPQELDEFTFSNLESSSSMNLFQDMAKPSGEEYIKLEEELGFGLDWCYV.

The Protein kinase domain maps to 28 to 339 (FKIVKELGHG…VRDALNHKYL (312 aa)). ATP-binding positions include 34-42 (LGHGAYGIV) and Lys-74. Asp-174 serves as the catalytic Proton acceptor. A Phosphothreonine modification is found at Thr-211. A TXY motif is present at residues 211 to 213 (TEY). A Phosphotyrosine modification is found at Tyr-213. Residues 400–450 (MQKREEQRQEEEEKELLEQQRQFPAQESMDISQTPYNNLETNIGTPQVEDD) are disordered. Over residues 422–444 (FPAQESMDISQTPYNNLETNIGT) the composition is skewed to polar residues.

Belongs to the protein kinase superfamily. CMGC Ser/Thr protein kinase family. MAP kinase subfamily. Mg(2+) serves as cofactor. Post-translationally, dually phosphorylated on Thr-211 and Tyr-213, which activates the enzyme.

It carries out the reaction L-seryl-[protein] + ATP = O-phospho-L-seryl-[protein] + ADP + H(+). It catalyses the reaction L-threonyl-[protein] + ATP = O-phospho-L-threonyl-[protein] + ADP + H(+). Its activity is regulated as follows. Activated by tyrosine and threonine phosphorylation. In Candida albicans (Yeast), this protein is Mitogen-activated protein kinase MKC1 (MKC1).